The sequence spans 305 residues: Oxygen-dependent coproporphyrinogen-III oxidase (305 aa).

Ser93 is a substrate binding site. A divalent metal cation-binding residues include His97 and His107. His107 functions as the Proton donor in the catalytic mechanism. 109-111 (NVR) contributes to the substrate binding site. His146 and His176 together coordinate a divalent metal cation. The segment at 241 to 276 (YVEFNLVFDRGTLFGLQSGGRTESILMSLPPQVRWG) is important for dimerization. Substrate is bound at residue 259-261 (GGR).

The protein belongs to the aerobic coproporphyrinogen-III oxidase family. Homodimer. A divalent metal cation is required as a cofactor.

The protein localises to the cytoplasm. It catalyses the reaction coproporphyrinogen III + O2 + 2 H(+) = protoporphyrinogen IX + 2 CO2 + 2 H2O. It participates in porphyrin-containing compound metabolism; protoporphyrin-IX biosynthesis; protoporphyrinogen-IX from coproporphyrinogen-III (O2 route): step 1/1. Functionally, involved in the heme biosynthesis. Catalyzes the aerobic oxidative decarboxylation of propionate groups of rings A and B of coproporphyrinogen-III to yield the vinyl groups in protoporphyrinogen-IX. The protein is Oxygen-dependent coproporphyrinogen-III oxidase of Pseudomonas aeruginosa (strain LESB58).